The sequence spans 269 residues: Hemin import ATP-binding protein HmuV (269 aa).

Positions 5 to 242 constitute an ABC transporter domain; the sequence is LDAEAASFAI…SLIRRVFDIA (238 aa). Position 37-44 (37-44) interacts with ATP; the sequence is GPNGAGKS.

Belongs to the ABC transporter superfamily. Heme (hemin) importer (TC 3.A.1.14.5) family. In terms of assembly, the complex is composed of two ATP-binding proteins (HmuV), two transmembrane proteins (HmuU) and a solute-binding protein (HmuT).

Its subcellular location is the cell inner membrane. Its function is as follows. Part of the ABC transporter complex HmuTUV involved in hemin import. Responsible for energy coupling to the transport system. The protein is Hemin import ATP-binding protein HmuV of Rhodopseudomonas palustris (strain BisB18).